The sequence spans 72 residues: Defensin-like protein 35 (72 aa).

Positions 1-22 (MASNKISFSFVLCLYMCSLLDA) are cleaved as a signal peptide. 3 cysteine pairs are disulfide-bonded: Cys-32-Cys-58, Cys-44-Cys-67, and Cys-48-Cys-69.

It belongs to the DEFL family.

It is found in the secreted. This chain is Defensin-like protein 35, found in Arabidopsis thaliana (Mouse-ear cress).